The primary structure comprises 107 residues: Large ribosomal subunit protein uL24 (107 aa).

This sequence belongs to the universal ribosomal protein uL24 family. In terms of assembly, part of the 50S ribosomal subunit.

In terms of biological role, one of two assembly initiator proteins, it binds directly to the 5'-end of the 23S rRNA, where it nucleates assembly of the 50S subunit. Its function is as follows. One of the proteins that surrounds the polypeptide exit tunnel on the outside of the subunit. The chain is Large ribosomal subunit protein uL24 from Carboxydothermus hydrogenoformans (strain ATCC BAA-161 / DSM 6008 / Z-2901).